The chain runs to 158 residues: Small ribosomal subunit protein uS7 (158 aa).

It belongs to the universal ribosomal protein uS7 family. In terms of assembly, part of the 30S ribosomal subunit. Contacts proteins S9 and S11.

Its function is as follows. One of the primary rRNA binding proteins, it binds directly to 16S rRNA where it nucleates assembly of the head domain of the 30S subunit. Is located at the subunit interface close to the decoding center, probably blocks exit of the E-site tRNA. The polypeptide is Small ribosomal subunit protein uS7 (Bacteroides fragilis (strain YCH46)).